The following is a 570-amino-acid chain: Spermatocyte protein spe-26 (570 aa).

Kelch repeat units follow at residues 244 to 291 (VLII…IVDG), 293 to 338 (LYLF…SVVY), 341 to 393 (RIYV…VFEN), 395 to 440 (IYVS…NHGN), 442 to 487 (LLIV…SYKG), and 489 to 535 (LFSV…VAPN).

In terms of tissue distribution, testis, in both spermatogonial cells and spermatocytes.

It is found in the cytoplasm. The protein localises to the cytoskeleton. May play a role in the spermatocyte cytoskeleton, possibly interacting with actin. This chain is Spermatocyte protein spe-26 (spe-26), found in Caenorhabditis elegans.